The sequence spans 228 residues: Putative N-acetylmannosamine-6-phosphate 2-epimerase (228 aa).

The protein belongs to the NanE family.

The enzyme catalyses an N-acyl-D-glucosamine 6-phosphate = an N-acyl-D-mannosamine 6-phosphate. The protein operates within amino-sugar metabolism; N-acetylneuraminate degradation; D-fructose 6-phosphate from N-acetylneuraminate: step 3/5. In terms of biological role, converts N-acetylmannosamine-6-phosphate (ManNAc-6-P) to N-acetylglucosamine-6-phosphate (GlcNAc-6-P). In Pasteurella multocida (strain Pm70), this protein is Putative N-acetylmannosamine-6-phosphate 2-epimerase.